A 1001-amino-acid chain; its full sequence is RNA-binding protein 12B (1001 aa).

Phosphoserine is present on residues Ser-98, Ser-101, and Ser-112. A Glycyl lysine isopeptide (Lys-Gly) (interchain with G-Cter in SUMO2) cross-link involves residue Lys-114. Over residues 119-128 (NSGYGSSINQ) the composition is skewed to polar residues. Residues 119–147 (NSGYGSSINQDAGFHTNGTGHGNLRPRKT) are disordered. Lys-151 participates in a covalent cross-link: Glycyl lysine isopeptide (Lys-Gly) (interchain with G-Cter in SUMO2). One can recognise an RRM 1 domain in the interval 155–230 (PYLFLRGLPY…RFIEVMQGSE (76 aa)). A compositionally biased stretch (basic and acidic residues) spans 247-262 (LRRSEEHSPPRGINDR). Residues 247-278 (LRRSEEHSPPRGINDRHFRKRSHSKSPRRTRS) form a disordered region. A phosphoserine mark is found at Ser-250 and Ser-254. Residues 263-278 (HFRKRSHSKSPRRTRS) show a composition bias toward basic residues. Position 276 is a phosphothreonine (Thr-276). 4 positions are modified to phosphoserine: Ser-278, Ser-280, Ser-292, and Ser-294. The RRM 2 domain maps to 284 to 360 (FYVHLKNLSL…RPVHIDPISR (77 aa)). N6-acetyllysine is present on Lys-319. Lys-335 participates in a covalent cross-link: Glycyl lysine isopeptide (Lys-Gly) (interchain with G-Cter in SUMO2). At Ser-377 the chain carries Phosphoserine. Positions 400-477 (LCIYIRNFPF…TEVLLRLISE (78 aa)) constitute an RRM 3 domain. Glycyl lysine isopeptide (Lys-Gly) (interchain with G-Cter in SUMO2) cross-links involve residues Lys-514 and Lys-541. Residues 544–587 (QRDFRQPDRHPPEDFRHSSEDFRFPPEDFRHSPEDFRRPREEDF) form a disordered region. Phosphoserine is present on residues Ser-575, Ser-591, and Ser-638. Positions 631-881 (LEEDFRRSPT…FRSPPDDFRS (251 aa)) are enriched in basic and acidic residues. Residues 631–882 (LEEDFRRSPT…RSPPDDFRSH (252 aa)) form a disordered region. Residue Thr-640 is modified to Phosphothreonine. A phosphoserine mark is found at Ser-710 and Ser-718. A Glycyl lysine isopeptide (Lys-Gly) (interchain with G-Cter in SUMO2) cross-link involves residue Lys-895. In terms of domain architecture, RRM 4 spans 925 to 1001 (TPIKIMNLPF…GPRKVKLTLL (77 aa)).

This Homo sapiens (Human) protein is RNA-binding protein 12B (RBM12B).